We begin with the raw amino-acid sequence, 182 residues long: LPS-assembly lipoprotein LptE (182 aa).

The first 19 residues, 1 to 19 (MRHRILTLLLGLAVLVTAG), serve as a signal peptide directing secretion. Residue cysteine 20 is the site of N-palmitoyl cysteine attachment. Cysteine 20 carries the S-diacylglycerol cysteine lipid modification.

The protein belongs to the LptE lipoprotein family. Component of the lipopolysaccharide transport and assembly complex. Interacts with LptD.

It is found in the cell outer membrane. In terms of biological role, together with LptD, is involved in the assembly of lipopolysaccharide (LPS) at the surface of the outer membrane. Required for the proper assembly of LptD. Binds LPS and may serve as the LPS recognition site at the outer membrane. The sequence is that of LPS-assembly lipoprotein LptE from Photorhabdus laumondii subsp. laumondii (strain DSM 15139 / CIP 105565 / TT01) (Photorhabdus luminescens subsp. laumondii).